The chain runs to 176 residues: MSKVKKNDETLSEVLVDVNRVTKVVKGGRSFAFSAYVVVGDKAGRVGAGHGKAKEVNEARGKAKQAAKKRMMKVPLYQNRTIHHDVVGKSGAAKVILRRAKAGTGVIAGGSMRAIFDSLGIHDVVAKSIGSTNVYAMISATFDALNKLASPKSIAMRRDKKVNEISVKSADIQVNE.

Residues Leu-11–Val-74 enclose the S5 DRBM domain.

Belongs to the universal ribosomal protein uS5 family. As to quaternary structure, part of the 30S ribosomal subunit. Contacts proteins S4 and S8.

With S4 and S12 plays an important role in translational accuracy. Its function is as follows. Located at the back of the 30S subunit body where it stabilizes the conformation of the head with respect to the body. In Rickettsia rickettsii (strain Iowa), this protein is Small ribosomal subunit protein uS5.